The following is a 666-amino-acid chain: Asperfuranone cluster transcription factor afoA (666 aa).

The segment at residues Cys16–Cys43 is a DNA-binding region (zn(2)-C6 fungal-type). 2 disordered regions span residues Leu184–Arg206 and Ala347–Ala373. Low complexity predominate over residues Leu353–Ser369.

Its subcellular location is the nucleus. Its function is as follows. Transcription factor that regulates the expression of the gene cluster that mediates the biosynthesis of asperfuranone, a probable antitumor agent. The chain is Asperfuranone cluster transcription factor afoA from Emericella nidulans (strain FGSC A4 / ATCC 38163 / CBS 112.46 / NRRL 194 / M139) (Aspergillus nidulans).